The primary structure comprises 199 residues: NAD(P)H dehydrogenase (quinone) (199 aa).

Positions 4-190 (VLVLYYSTYG…DGARYQGRHV (187 aa)) constitute a Flavodoxin-like domain. Residues 10–15 (STYGHI) and 78–80 (TRY) each bind FMN. Residue Tyr12 participates in NAD(+) binding. Trp98 contacts substrate. Residues 113 to 119 (SSASQHG) and His134 each bind FMN.

This sequence belongs to the WrbA family. FMN serves as cofactor.

The catalysed reaction is a quinone + NADH + H(+) = a quinol + NAD(+). It catalyses the reaction a quinone + NADPH + H(+) = a quinol + NADP(+). The sequence is that of NAD(P)H dehydrogenase (quinone) from Methylobacterium sp. (strain 4-46).